Here is a 110-residue protein sequence, read N- to C-terminus: Cytochrome c (110 aa).

4 residues coordinate heme c: C21, C24, H25, and M87.

The protein belongs to the cytochrome c family. Binds 1 heme c group covalently per subunit.

Its subcellular location is the mitochondrion intermembrane space. In terms of biological role, electron carrier protein. The oxidized form of the cytochrome c heme group can accept an electron from the heme group of the cytochrome c1 subunit of cytochrome reductase. Cytochrome c then transfers this electron to the cytochrome oxidase complex, the final protein carrier in the mitochondrial electron-transport chain. This Kluyveromyces lactis (strain ATCC 8585 / CBS 2359 / DSM 70799 / NBRC 1267 / NRRL Y-1140 / WM37) (Yeast) protein is Cytochrome c (CYCK).